We begin with the raw amino-acid sequence, 120 residues long: U13-lycotoxin-Ls1f (120 aa).

Positions 1-19 (MKILFVLISILYAVYRFSS) are cleaved as a signal peptide. The propeptide occupies 20 to 54 (EEDVDSAYLANELEPVEDINSEQYAALEPKEEQER). 4 cysteine pairs are disulfide-bonded: cysteine 56-cysteine 70, cysteine 63-cysteine 76, cysteine 69-cysteine 87, and cysteine 78-cysteine 85. Residues 56 to 95 (CAGMGQDCKDDCDCCLNIATCNCWFGRYFCSCTFGDYQTC) enclose the Agouti domain.

This sequence belongs to the neurotoxin 05 (agouti) family. Post-translationally, contains 6 disulfide bonds. As to expression, expressed by the venom gland.

The protein localises to the secreted. This is U13-lycotoxin-Ls1f from Lycosa singoriensis (Wolf spider).